The primary structure comprises 3147 residues: Probable polyketide synthase 1 (3147 aa).

Residues 12 to 457 (SSDVAVIGVG…GSNCHLIIQE (446 aa)) enclose the Ketosynthase family 3 (KS3) domain. Active-site for beta-ketoacyl synthase activity residues include cysteine 180 and histidine 319. Residues 345–369 (QLNNFSTDGNDNDDDDDDNTSPEPL) are disordered. Over residues 354 to 364 (NDNDDDDDDNT) the composition is skewed to acidic residues. The For beta-ketoacyl synthase activity role is filled by histidine 380. Residues 672 to 705 (GIYPSISVGHSFGEVSSYYLSGIISLETACKIVY) are acyl/malonyl transferase. Serine 682 acts as the For acyl/malonyl transferase activity in catalysis. An N-terminal hotdog fold region spans residues 976–1127 (NRLEGPTTSL…ATISLEQQQP (152 aa)). The PKS/mFAS DH domain maps to 976-1298 (NRLEGPTTSL…IKSTNPKSTK (323 aa)). The Proton acceptor; for dehydratase activity role is filled by histidine 1014. The interval 1149–1298 (DISKLDKFEL…IKSTNPKSTK (150 aa)) is C-terminal hotdog fold. The active-site Proton donor; for dehydratase activity is the aspartate 1209. The Carrier domain occupies 2568-2645 (SSNISLQDKI…SFLEKVNGLS (78 aa)). Serine 2605 is modified (O-(pantetheine 4'-phosphoryl)serine). Residues 2723–2747 (PSLSQSDVLKTPPIKSLNNTKNSSL) are disordered. Residues 2738-2747 (SLNNTKNSSL) are compositionally biased toward polar residues. Residues 2789 to 3147 (VLGIGISVPG…FEGCFLKNVV (359 aa)) form a chalcone synthase region. Cysteine 2930 is a catalytic residue.

The protein in the C-terminal section; belongs to the thiolase-like superfamily. Chalcone/stilbene synthases family. In terms of assembly, homodimer. Requires pantetheine 4'-phosphate as cofactor.

The catalysed reaction is (E)-4-coumaroyl-CoA + 3 malonyl-CoA + 3 H(+) = 2',4,4',6'-tetrahydroxychalcone + 3 CO2 + 4 CoA. The protein operates within secondary metabolite biosynthesis; flavonoid biosynthesis. Functionally, probable polyketide synthase. Produces only acylpyrones; in vitro. The chain is Probable polyketide synthase 1 (stlA) from Dictyostelium discoideum (Social amoeba).